We begin with the raw amino-acid sequence, 402 residues long: Phosphoglycerate kinase (402 aa).

Substrate is bound by residues 24–26 (DFN), arginine 40, 63–66 (HFGR), arginine 122, and arginine 155. Residues lysine 206, glycine 297, glutamate 328, and 358–361 (GGDS) contribute to the ATP site.

The protein belongs to the phosphoglycerate kinase family. As to quaternary structure, monomer.

Its subcellular location is the cytoplasm. It carries out the reaction (2R)-3-phosphoglycerate + ATP = (2R)-3-phospho-glyceroyl phosphate + ADP. It participates in carbohydrate degradation; glycolysis; pyruvate from D-glyceraldehyde 3-phosphate: step 2/5. In Prochlorococcus marinus (strain AS9601), this protein is Phosphoglycerate kinase.